A 139-amino-acid polypeptide reads, in one-letter code: Acyl carrier protein 5, chloroplastic (139 aa).

Residues 1–54 (MATSFCSSISMQAPFSATTTRFCLNKQATIFNNEKTNNLSFSLRRLMPARLAVS) constitute a chloroplast transit peptide. The 76-residue stretch at 59 to 134 (QETVEKVSEI…QAAELIEELV (76 aa)) folds into the Carrier domain. S94 bears the O-(pantetheine 4'-phosphoryl)serine mark.

This sequence belongs to the acyl carrier protein (ACP) family. 4'-phosphopantetheine is transferred from CoA to a specific serine of apo-ACP by acpS. This modification is essential for activity because fatty acids are bound in thioester linkage to the sulfhydryl of the prosthetic group.

The protein resides in the plastid. It is found in the chloroplast. Functionally, carrier of the growing fatty acid chain in fatty acid biosynthesis. This chain is Acyl carrier protein 5, chloroplastic (ACP5), found in Arabidopsis thaliana (Mouse-ear cress).